We begin with the raw amino-acid sequence, 735 residues long: Protein RETICULATA-RELATED 5, chloroplastic (735 aa).

A chloroplast-targeting transit peptide spans methionine 1–proline 75. Helical transmembrane passes span alanine 519 to tyrosine 539 and valine 582 to glycine 602. Positions alanine 714 to glutamate 726 are enriched in polar residues. A disordered region spans residues alanine 714–glutamine 735.

It belongs to the RETICULATA family.

It is found in the plastid. It localises to the chloroplast membrane. In terms of biological role, may play a role in leaf development. This Arabidopsis thaliana (Mouse-ear cress) protein is Protein RETICULATA-RELATED 5, chloroplastic.